The primary structure comprises 298 residues: Nucleotide-binding protein Csal_2229 (298 aa).

An ATP-binding site is contributed by 8–15 (GRSGSGKS). 59–62 (DARN) lines the GTP pocket.

This sequence belongs to the RapZ-like family.

Its function is as follows. Displays ATPase and GTPase activities. In Chromohalobacter salexigens (strain ATCC BAA-138 / DSM 3043 / CIP 106854 / NCIMB 13768 / 1H11), this protein is Nucleotide-binding protein Csal_2229.